The following is a 209-amino-acid chain: Ribosomal RNA large subunit methyltransferase E (209 aa).

S-adenosyl-L-methionine is bound by residues Gly-63, Trp-65, Asp-83, Asp-99, and Asp-124. Catalysis depends on Lys-164, which acts as the Proton acceptor.

It belongs to the class I-like SAM-binding methyltransferase superfamily. RNA methyltransferase RlmE family.

Its subcellular location is the cytoplasm. The enzyme catalyses uridine(2552) in 23S rRNA + S-adenosyl-L-methionine = 2'-O-methyluridine(2552) in 23S rRNA + S-adenosyl-L-homocysteine + H(+). Specifically methylates the uridine in position 2552 of 23S rRNA at the 2'-O position of the ribose in the fully assembled 50S ribosomal subunit. This Yersinia enterocolitica serotype O:8 / biotype 1B (strain NCTC 13174 / 8081) protein is Ribosomal RNA large subunit methyltransferase E.